The following is a 253-amino-acid chain: Complement C1q subcomponent subunit B (253 aa).

Residues 1-25 form the signal peptide; the sequence is MKTQWGEVWTHLLLLLLGFLHVSWA. Residue Q26 is modified to Pyrrolidone carboxylic acid. One can recognise a Collagen-like domain in the interval 29-112; that stretch reads CTGPPGIPGI…GPRGPKGDSG (84 aa). 4-hydroxyproline is present on residues P33, P36, P39, P51, and P54. Residues 35–115 form a disordered region; sequence IPGIPGVPGV…GPKGDSGDYG (81 aa). K57 and K60 each carry 5-hydroxylysine. At P63 the chain carries 4-hydroxyproline. K75 carries the 5-hydroxylysine modification. Residues 78–96 are compositionally biased toward low complexity; the sequence is PGIPGTPGKVGPKGPVGPK. Residues P81 and P84 each carry the 4-hydroxyproline modification. A 5-hydroxylysine mark is found at K90 and K96. 4-hydroxyproline is present on P99. K108 carries the post-translational modification 5-hydroxylysine. The C1q domain occupies 115-253; sequence GATQKVAFSA…GFLLFPDMDA (139 aa). C179 and C198 are oxidised to a cystine. Ca(2+)-binding residues include D199, Y200, and Q206.

Core component of the complement C1 complex, a calcium-dependent complex composed of 1 molecule of the C1Q subcomplex, 2 molecules of C1R and 2 molecules of C1S. The C1Q subcomplex is composed 18 subunits: 3 chains of C1QA, C1QB, and C1QC trimerize to form 6 collagen-like triple helices connected to six globular ligand-recognition modules (C1q domain). In terms of processing, hydroxylated on lysine and proline residues. Hydroxylated lysine residues can be glycosylated. Mouse C1Q contains up to 64.0 hydroxylysine-galactosylglucose residues. Total percentage hydroxylysine residues glycosylated is 95.1%. Contains no hydroxylysine-monosaccharides. In terms of tissue distribution, highest expression in thioglycolate-activated peritoneal macrophages. Also found in spleen, thymus and heart. Very weak expression liver, kidney, lung and intestine.

The protein resides in the secreted. It is found in the cell surface. The C1Q subcomplex is inhibited by sulfated molecules, such as triterpenoid sulfates, heparan sulfate, or chondroitin sulfates. Core component of the complement C1 complex, a multiprotein complex that initiates the classical pathway of the complement system, a cascade of proteins that leads to phagocytosis and breakdown of pathogens and signaling that strengthens the adaptive immune system. The classical complement pathway is initiated by the C1Q subcomplex of the C1 complex, which specifically binds IgG or IgM immunoglobulins complexed with antigens, forming antigen-antibody complexes on the surface of pathogens: C1QA, together with C1QB and C1QC, specifically recognizes and binds the Fc regions of IgG or IgM via its C1q domain. Immunoglobulin-binding activates the proenzyme C1R, which cleaves C1S, initiating the proteolytic cascade of the complement system. The C1Q subcomplex is activated by a hexamer of IgG complexed with antigens, while it is activated by a pentameric IgM. The C1Q subcomplex also recognizes and binds phosphatidylserine exposed on the surface of cells undergoing programmed cell death, possibly promoting activation of the complement system. The polypeptide is Complement C1q subcomponent subunit B (Mus musculus (Mouse)).